A 427-amino-acid chain; its full sequence is Zinc-finger homeodomain protein 7 (427 aa).

Disordered stretches follow at residues 1 to 60 and 91 to 118; these read MEYK…SLMD and LHAA…QRHH. The span at 10–28 shows a compositional bias: acidic residues; that stretch reads EEEEEEEEEEDDEEEDEEE. The segment covering 50–60 has biased composition (low complexity); sequence SSASSPSSLMD. The ZF-HD dimerization-type; degenerate zinc-finger motif lies at 163–211; sequence YRECLKNHAARMGAHVLDGCGEFMSSPGDGAAALACAACGCHRSFHRRE. 2 disordered regions span residues 264–320 and 375–427; these read KRPP…SKKR and HLAK…QHDA. 2 stretches are compositionally biased toward low complexity: residues 271-283 and 301-312; these read VSPA…LAES and HAAAVVAASASA. The homeobox DNA-binding region spans 318-381; the sequence is KKRFRTKFTA…NNKHLAKTPP (64 aa). A compositionally biased stretch (pro residues) spans 380 to 401; sequence PPSPTSQPPPPPLHHDPSPPPP. Residues 402-416 are compositionally biased toward basic residues; the sequence is PHHHHHHHHHHHPPQ. Residues 417 to 427 are compositionally biased toward low complexity; that stretch reads HHQQQQQQHDA.

As to quaternary structure, homo- and heterodimer with other ZFHD proteins.

The protein localises to the nucleus. Putative transcription factor. The chain is Zinc-finger homeodomain protein 7 (ZHD7) from Oryza sativa subsp. japonica (Rice).